The chain runs to 83 residues: Small ribosomal subunit protein eS21 (83 aa).

The protein belongs to the eukaryotic ribosomal protein eS21 family. In terms of assembly, component of the 40S small ribosomal subunit. Interacts with sta.

It localises to the cytoplasm. Its subcellular location is the cytosol. The protein resides in the rough endoplasmic reticulum. The chain is Small ribosomal subunit protein eS21 (RpS21) from Ceratitis capitata (Mediterranean fruit fly).